A 624-amino-acid polypeptide reads, in one-letter code: Glucoamylase (624 aa).

Positions 1-18 (MRQFLALAAAASIAVADS) are cleaved as a signal peptide. A CBM21 domain is found at 26–132 (NSPPDDKAVA…NSQQLNVQVE (107 aa)). N-linked (GlcNAc...) asparagine glycosylation is found at Asn-54, Asn-70, Asn-98, Asn-111, Asn-168, Asn-267, and Asn-333. Catalysis depends on Asp-340, which acts as the Proton acceptor. The active-site Proton donor is Glu-343. 2 N-linked (GlcNAc...) asparagine glycosylation sites follow: Asn-460 and Asn-582.

The protein belongs to the glycosyl hydrolase 15 family.

It catalyses the reaction Hydrolysis of terminal (1-&gt;4)-linked alpha-D-glucose residues successively from non-reducing ends of the chains with release of beta-D-glucose.. This is Glucoamylase (GAA) from Blastobotrys adeninivorans (Yeast).